A 716-amino-acid polypeptide reads, in one-letter code: Polycystin-2 (716 aa).

Composition is skewed to basic and acidic residues over residues 1–10 (MNYGAADERW) and 30–41 (MVSEEYEHDKKK). The interval 1–44 (MNYGAADERWANPPQPVAAAEHGPSFDHSMVSEEYEHDKKKNPA) is disordered. Residues 1–72 (MNYGAADERW…SDGKIKLTAR (72 aa)) are Cytoplasmic-facing. The helical transmembrane segment at 73 to 93 (SFMEVGGYAVFLIVLVYVAFA) threads the bilayer. Topologically, residues 94 to 324 (QNSIQSYYYS…YQTSGGTRMM (231 aa)) are extracellular. Residues N150 and N177 are each glycosylated (N-linked (GlcNAc...) asparagine). Residues C180 and C193 are joined by a disulfide bond. The chain crosses the membrane as a helical span at residues 325–345 (IFEGIFCGFILYFIFEELFAI). At 346-355 (GRHRLHYLTQ) the chain is on the cytoplasmic side. A helical membrane pass occupies residues 356-376 (FWNLVDVVLLGFSVATIILSV). N-linked (GlcNAc...) asparagine glycosylation is present at N377. Over 377-409 (NRTKTGVNRVNSVIENGLTNAPFDDVTSSENSY) the chain is Extracellular. A helical transmembrane segment spans residues 410–430 (LNIKACVVFVAWVKVFKFISV). The Cytoplasmic segment spans residues 431–447 (NKTMSQLSSTLTRSAKD). Residues 448 to 468 (IGGFAVMFAVFFFAFAQFGYL) traverse the membrane as a helical segment. At 469-482 (CFGTQIADYSNLYN) the chain is on the extracellular side. The segment at residues 483–497 (SAFALLRLILGDFNF) is an intramembrane region (pore-forming). Topologically, residues 498–510 (SALESCNRFFGPA) are extracellular. The chain crosses the membrane as a helical span at residues 511–531 (FFIAYVFFVSFILLNMFLAII). Residues 532–716 (NDSYVEVKAE…ITSIADKKEE (185 aa)) lie on the Cytoplasmic side of the membrane. S534 is modified (phosphoserine; by CK2). A coiled-coil region spans residues 613–680 (EKVAEDIADE…IEKQRVQQQD (68 aa)). Positions 696–716 (RNRESAARRPTITSIADKKEE) are disordered.

It belongs to the polycystin family. In terms of processing, phosphorylated. CK2 (kin-3 and kin-10) and calcineurin act antagonistically to regulate the phosphorylation state. Exclusively expressed in a subset of 3 categories of adult male sensory neurons: ray neurons, hook neurons and head cephalic (CEM) neurons. Expressed in the male tail.

The protein localises to the cell membrane. It is found in the cell projection. Its subcellular location is the cilium membrane. It localises to the cilium. The protein resides in the axon. The protein localises to the dendrite. It is found in the perikaryon. Its subcellular location is the endoplasmic reticulum membrane. In terms of biological role, functions as a calcium permeable cation channel. Required for 2 aspects of male mating behavior: response to hermaphrodite contact and vulva location. Acts in the same pathway as lov-1 and atp-2 in response behavior. This Caenorhabditis elegans protein is Polycystin-2.